The sequence spans 569 residues: Dihydroxy-acid dehydratase (569 aa).

Cys-61 provides a ligand contact to [2Fe-2S] cluster. Asp-93 serves as a coordination point for Mg(2+). Cys-134 contacts [2Fe-2S] cluster. Mg(2+) contacts are provided by Asp-135 and Lys-136. The residue at position 136 (Lys-136) is an N6-carboxylysine. A [2Fe-2S] cluster-binding site is contributed by Cys-211. Glu-462 lines the Mg(2+) pocket. Ser-488 (proton acceptor) is an active-site residue.

Belongs to the IlvD/Edd family. In terms of assembly, homodimer. It depends on [2Fe-2S] cluster as a cofactor. The cofactor is Mg(2+).

The catalysed reaction is (2R)-2,3-dihydroxy-3-methylbutanoate = 3-methyl-2-oxobutanoate + H2O. It carries out the reaction (2R,3R)-2,3-dihydroxy-3-methylpentanoate = (S)-3-methyl-2-oxopentanoate + H2O. The protein operates within amino-acid biosynthesis; L-isoleucine biosynthesis; L-isoleucine from 2-oxobutanoate: step 3/4. It participates in amino-acid biosynthesis; L-valine biosynthesis; L-valine from pyruvate: step 3/4. Functions in the biosynthesis of branched-chain amino acids. Catalyzes the dehydration of (2R,3R)-2,3-dihydroxy-3-methylpentanoate (2,3-dihydroxy-3-methylvalerate) into 2-oxo-3-methylpentanoate (2-oxo-3-methylvalerate) and of (2R)-2,3-dihydroxy-3-methylbutanoate (2,3-dihydroxyisovalerate) into 2-oxo-3-methylbutanoate (2-oxoisovalerate), the penultimate precursor to L-isoleucine and L-valine, respectively. This chain is Dihydroxy-acid dehydratase, found in Tropheryma whipplei (strain Twist) (Whipple's bacillus).